The following is a 406-amino-acid chain: Bifunctional enzyme IspD/IspF (406 aa).

The tract at residues 1–247 (MSLIRVNGEA…TPFFNPAKDT (247 aa)) is 2-C-methyl-D-erythritol 4-phosphate cytidylyltransferase. The tract at residues 248-406 (FIGMGFDTHA…HASMRYKQKL (159 aa)) is 2-C-methyl-D-erythritol 2,4-cyclodiphosphate synthase. A divalent metal cation is bound by residues Asp254 and His256. 4-CDP-2-C-methyl-D-erythritol 2-phosphate is bound by residues 254 to 256 (DTH) and 280 to 281 (HS). His288 provides a ligand contact to a divalent metal cation. 4-CDP-2-C-methyl-D-erythritol 2-phosphate-binding positions include 302–304 (DIG), 307–311 (FPDND), 378–381 (TTME), and Phe385.

The protein in the N-terminal section; belongs to the IspD/TarI cytidylyltransferase family. IspD subfamily. In the C-terminal section; belongs to the IspF family. A divalent metal cation is required as a cofactor.

The enzyme catalyses 2-C-methyl-D-erythritol 4-phosphate + CTP + H(+) = 4-CDP-2-C-methyl-D-erythritol + diphosphate. It catalyses the reaction 4-CDP-2-C-methyl-D-erythritol 2-phosphate = 2-C-methyl-D-erythritol 2,4-cyclic diphosphate + CMP. It functions in the pathway isoprenoid biosynthesis; isopentenyl diphosphate biosynthesis via DXP pathway; isopentenyl diphosphate from 1-deoxy-D-xylulose 5-phosphate: step 2/6. It participates in isoprenoid biosynthesis; isopentenyl diphosphate biosynthesis via DXP pathway; isopentenyl diphosphate from 1-deoxy-D-xylulose 5-phosphate: step 4/6. Its function is as follows. Bifunctional enzyme that catalyzes the formation of 4-diphosphocytidyl-2-C-methyl-D-erythritol from CTP and 2-C-methyl-D-erythritol 4-phosphate (MEP) (IspD), and catalyzes the conversion of 4-diphosphocytidyl-2-C-methyl-D-erythritol 2-phosphate (CDP-ME2P) to 2-C-methyl-D-erythritol 2,4-cyclodiphosphate (ME-CPP) with a corresponding release of cytidine 5-monophosphate (CMP) (IspF). This is Bifunctional enzyme IspD/IspF from Helicobacter acinonychis (strain Sheeba).